The following is a 121-amino-acid chain: Large ribosomal subunit protein bL12 (121 aa).

The protein belongs to the bacterial ribosomal protein bL12 family. In terms of assembly, homodimer. Part of the ribosomal stalk of the 50S ribosomal subunit. Forms a multimeric L10(L12)X complex, where L10 forms an elongated spine to which 2 to 4 L12 dimers bind in a sequential fashion. Binds GTP-bound translation factors.

Functionally, forms part of the ribosomal stalk which helps the ribosome interact with GTP-bound translation factors. Is thus essential for accurate translation. This Shewanella piezotolerans (strain WP3 / JCM 13877) protein is Large ribosomal subunit protein bL12.